The following is a 111-amino-acid chain: uncharacterized protein (111 aa).

This sequence to B.subtilis XkdW.

This is an uncharacterized protein from Bacillus subtilis (strain 168).